Here is an 835-residue protein sequence, read N- to C-terminus: Cap-specific mRNA (nucleoside-2'-O-)-methyltransferase 1 (835 aa).

The Bipartite nuclear localization signal motif lies at 2 to 19 (RRRNDPECTAPIKKQKKR). Residues 24-68 (ALNLSAASGDEPPSSVNHAAKASTTSLSGSDSETEGKQHGSDSFD) are disordered. A phosphoserine mark is found at Ser-28, Ser-31, Ser-53, Ser-66, and Ser-91. Residues 37 to 54 (SSVNHAAKASTTSLSGSD) are compositionally biased toward polar residues. Basic and acidic residues predominate over residues 57–68 (TEGKQHGSDSFD). The 47-residue stretch at 87–133 (YNSVSQKLMAKMGFREGEGLGKYSQGRKDIVEASNQKGRRGLGLTLQ) folds into the G-patch domain. Lys-108 carries the post-translational modification N6-acetyllysine. Substrate is bound by residues 203–207 (KSVFD) and Arg-218. Residues 231–450 (FFLNRAAMKM…ERYVVCKGLK (220 aa)) form the RrmJ-type SAM-dependent 2'-O-MTase domain. Asn-234 lines the S-adenosyl-L-methionine pocket. Lys-239 is an active-site residue. S-adenosyl-L-methionine-binding positions include 277 to 283 (CAGPGGF) and 335 to 336 (DI). Residue Asp-364 is part of the active site. 374–376 (NLQ) is a substrate binding site. The active-site Proton acceptor is the Lys-404. Asn-439 contributes to the substrate binding site. Positions 727-835 (SSGTPKLSYT…VLSFIQTHSA (109 aa)) are interaction with POLR2A. The WW domain occupies 752-786 (RTVNEPWTMGFSKSFKRKFFYNKKTKISTFDLPAD).

In terms of assembly, interacts with POLR2A (via C-terminus).

Its subcellular location is the nucleus. It carries out the reaction a 5'-end (N(7)-methyl 5'-triphosphoguanosine)-ribonucleoside in mRNA + S-adenosyl-L-methionine = a 5'-end (N(7)-methyl 5'-triphosphoguanosine)-(2'-O-methyl-ribonucleoside) in mRNA + S-adenosyl-L-homocysteine + H(+). S-adenosyl-L-methionine-dependent methyltransferase that mediates mRNA cap1 2'-O-ribose methylation to the 5'-cap structure of mRNAs. Methylates the ribose of the first nucleotide of a m(7)GpppG-capped mRNA and small nuclear RNA (snRNA) to produce m(7)GpppRm (cap1). Displays a preference for cap0 transcripts. Cap1 modification is linked to higher levels of translation. May be involved in the interferon response pathway. The chain is Cap-specific mRNA (nucleoside-2'-O-)-methyltransferase 1 (CMTR1) from Ailuropoda melanoleuca (Giant panda).